The following is a 380-amino-acid chain: Cyclohexane-1-carbonyl-CoA dehydrogenase (380 aa).

Belongs to the acyl-CoA dehydrogenase family. As to quaternary structure, homotetramer. FAD serves as cofactor.

The catalysed reaction is cyclohexane-1-carbonyl-CoA + oxidized [electron-transfer flavoprotein] + H(+) = cyclohex-1-ene-1-carbonyl-CoA + reduced [electron-transfer flavoprotein]. Functionally, acyl-CoA dehydrogenase involved in the anaerobic degradation of cyclohexane carboxylic acid (CHC). Catalyzes the 1,2-dehydrogenation of cyclohexane-1-carbonyl-CoA (CHCoA) to cyclohex-1-ene-1-carbonyl-CoA (CHeneCoA). An alternative substrate, cyclohex-3-ene-1-carboxyl-CoA can be converted to the corresponding cyclohexadiene-1-carboxyl-CoA isomers (30% rate compared to CHC). The chain is Cyclohexane-1-carbonyl-CoA dehydrogenase from Geobacter metallireducens (strain ATCC 53774 / DSM 7210 / GS-15).